Reading from the N-terminus, the 151-residue chain is MKKTTRTMAAHKHVALVAHDNCKGELLRWVTENKEKLQRHFLYATGTTGHMLSKETGLAIKSMISGPMGGDQQLGALISEGKIDVLIFFWDPLNAVPHDPDVKALLRIASVWNIPVATNRASAKFLFSSSLMEQEVQIEIPDYQAYLAERT.

The MGS-like domain maps to 1–151 (MKKTTRTMAA…DYQAYLAERT (151 aa)). Residues H19, K23, 45 to 48 (TGTT), and 65 to 66 (SG) each bind substrate. D71 functions as the Proton donor/acceptor in the catalytic mechanism. H98 lines the substrate pocket.

It belongs to the methylglyoxal synthase family.

It catalyses the reaction dihydroxyacetone phosphate = methylglyoxal + phosphate. Catalyzes the formation of methylglyoxal from dihydroxyacetone phosphate. The protein is Methylglyoxal synthase of Vibrio cholerae serotype O1 (strain ATCC 39541 / Classical Ogawa 395 / O395).